We begin with the raw amino-acid sequence, 408 residues long: BTB/POZ and MATH domain-containing protein 3 (408 aa).

One can recognise an MATH domain in the interval 24-158 (NGSHQFTIQG…DDCLVINCTV (135 aa)). In terms of domain architecture, BTB spans 194–261 (CDIAFQVGDE…IYTDVLPNVH (68 aa)).

Belongs to the Tdpoz family. In terms of assembly, homodimer or heterodimer with BPM3 and BPM5. Interacts with CUL3A and CUL3B. Interacts with RAP2-4 and RAP2-13. Binds to MYB56 at the promoter of FLOWERING LOCUS T (FT). Ubiquitous.

It is found in the nucleus. It localises to the cytoplasm. It functions in the pathway protein modification; protein ubiquitination. Functionally, may act as a substrate-specific adapter of an E3 ubiquitin-protein ligase complex (CUL3-RBX1-BTB) which mediates the ubiquitination and subsequent proteasomal degradation of target proteins. The sequence is that of BTB/POZ and MATH domain-containing protein 3 from Arabidopsis thaliana (Mouse-ear cress).